The following is a 466-amino-acid chain: Clusterin-like protein 1 (466 aa).

The N-terminal stretch at Met-1–Cys-20 is a signal peptide. Positions Lys-57–Asp-111 form a coiled coil. 5 cysteine pairs are disulfide-bonded: Cys-105–Cys-333, Cys-116–Cys-325, Cys-119–Cys-322, Cys-124–Cys-315, and Cys-131–Cys-305. Asn-196, Asn-257, Asn-311, Asn-351, Asn-412, and Asn-431 each carry an N-linked (GlcNAc...) asparagine glycan.

The protein belongs to the clusterin family.

The protein resides in the secreted. The sequence is that of Clusterin-like protein 1 (CLUL1) from Homo sapiens (Human).